A 321-amino-acid chain; its full sequence is Tyrosine recombinase XerC (321 aa).

In terms of domain architecture, Core-binding (CB) spans 16 to 107; that stretch reads SDIGQQIVRW…GLRSFARFLE (92 aa). The 188-residue stretch at 128 to 315 folds into the Tyr recombinase domain; sequence SVPKPIHMSA…DSERLLDVYR (188 aa). Catalysis depends on residues Arg-173, Lys-199, His-267, Arg-270, and His-293. Tyr-302 acts as the O-(3'-phospho-DNA)-tyrosine intermediate in catalysis.

The protein belongs to the 'phage' integrase family. XerC subfamily. As to quaternary structure, forms a cyclic heterotetrameric complex composed of two molecules of XerC and two molecules of XerD.

The protein localises to the cytoplasm. Its function is as follows. Site-specific tyrosine recombinase, which acts by catalyzing the cutting and rejoining of the recombining DNA molecules. The XerC-XerD complex is essential to convert dimers of the bacterial chromosome into monomers to permit their segregation at cell division. It also contributes to the segregational stability of plasmids. This Nitrobacter winogradskyi (strain ATCC 25391 / DSM 10237 / CIP 104748 / NCIMB 11846 / Nb-255) protein is Tyrosine recombinase XerC.